The following is a 323-amino-acid chain: Thymidylate synthase (323 aa).

DUMP is bound by residues arginine 21 and 172 to 173; that span reads RR. Cysteine 192 (nucleophile) is an active-site residue. DUMP-binding positions include 214-217, asparagine 225, and 255-257; these read RSND and HVY. Aspartate 217 provides a ligand contact to (6R)-5,10-methylene-5,6,7,8-tetrahydrofolate. Alanine 322 serves as a coordination point for (6R)-5,10-methylene-5,6,7,8-tetrahydrofolate.

This sequence belongs to the thymidylate synthase family. Bacterial-type ThyA subfamily. Homodimer.

It is found in the cytoplasm. The catalysed reaction is dUMP + (6R)-5,10-methylene-5,6,7,8-tetrahydrofolate = 7,8-dihydrofolate + dTMP. Its pathway is pyrimidine metabolism; dTTP biosynthesis. In terms of biological role, catalyzes the reductive methylation of 2'-deoxyuridine-5'-monophosphate (dUMP) to 2'-deoxythymidine-5'-monophosphate (dTMP) while utilizing 5,10-methylenetetrahydrofolate (mTHF) as the methyl donor and reductant in the reaction, yielding dihydrofolate (DHF) as a by-product. This enzymatic reaction provides an intracellular de novo source of dTMP, an essential precursor for DNA biosynthesis. This is Thymidylate synthase from Bordetella parapertussis (strain 12822 / ATCC BAA-587 / NCTC 13253).